A 193-amino-acid chain; its full sequence is Peptidyl-tRNA hydrolase 1 (193 aa).

Position 27 (Tyr27) interacts with tRNA. His32 acts as the Proton acceptor in catalysis. TRNA is bound by residues Phe80, Asn82, and Asn128.

This sequence belongs to the PTH family. Monomer.

It localises to the cytoplasm. The enzyme catalyses an N-acyl-L-alpha-aminoacyl-tRNA + H2O = an N-acyl-L-amino acid + a tRNA + H(+). In terms of biological role, hydrolyzes ribosome-free peptidyl-tRNAs (with 1 or more amino acids incorporated), which drop off the ribosome during protein synthesis, or as a result of ribosome stalling. Its function is as follows. Catalyzes the release of premature peptidyl moieties from peptidyl-tRNA molecules trapped in stalled 50S ribosomal subunits, and thus maintains levels of free tRNAs and 50S ribosomes. In Corynebacterium jeikeium (strain K411), this protein is Peptidyl-tRNA hydrolase 1.